The sequence spans 1723 residues: MRKLLLLIAASLLGVGLYAQSAKIKLDAPTTRTTCTNNSFKQFDASFSFNEVELTKVETKGGTFASVSIPGAFPTGEVGSPEVPAVRKLIAVPVGATPVVRVKSFTEQVYSLNQYGSEKLMPHQPSMSKSDDPEKVPFVYNAAAYARKGFVGQELTQVEMLGTMRGVRIAALTINPVQYDVVANQLKVRNNIEIEVSFQGADEVATQRLYDASFSPYFETAYKQLFNRDVYTDHGDLYNTPVRMLVVAGAKFKEALKPWLTWKAQKGFYLDVHYTDEAEVGTTNASIKAFIHKKYNDGLAASAAPVFLALVGDTDVISGEKGKKTKKVTDLYYSAVDGDYFPEMYTFRMSASSPEELTNIIDKVLMYEKATMPDKSYLEKALLIAGADSYWNPKIGQQTIKYAVQYYYNQDHGYTDVYSYPKAPYTGCYSHLNTGVGFANYTAHGSETSWADPSLTATQVKALTNKDKYFLAIGNCCVTAQFDYPQPCFGEVMTRVKEKGAYAYIGSSPNSYWGEDYYWSVGANAVFGVQPTFEGTSMGSYDATFLEDSYNTVNSIMWAGNLAATHAGNIGNITHIGAHYYWEAYHVLGDGSVMPYRAMPKTNTYTLPASLPQNQASYSIQASAGSYVAISKDGVLYGTGVANASGVATVNMTKQITENGNYDVVITRSNYLPVIKQIQAGEPSPYQPVSNLTATTQGQKVTLKWDAPSAKKAEASREVKRIGDGLFVTIEPANDVRANEAKVVLAADNVWGDNTGYQFLLDADHNTFGSVIPATGPLFTGTASSNLYSANFEYLIPANADPVVTTQNIIVTGQGEVVIPGGVYDYCITNPEPASGKMWIAGDGGNQPARYDDFTFEAGKKYTFTMRRAGMGDGTDMEVEDDSPASYTYTVYRDGTKIQEGLTATTFEEDGVAAGNHEYCVEVKYTAGVSPKVCKDVTVEGSNEFAPVQNLTGSAVGQKVTLKWDAPNGTPNPNPNPNPGTTTLSESFENGIPASWKTIDADGDGHGWKPGNAPGIAGYNSNGCVYSESFGLGGIGVLTPDNYLITPALDLPNGGKLTFWVCAQDANYASEHYAVYASSTGNDASNFTNALLEETITAKGVRSPEAIRGRIQGTWRQKTVDLPAGTKYVAFRHFQSTDMFYIDLDEVEIKANGKRADFTETFESSTHGEAPAEWTTIDADGDGQDWLCLSSGQLDWLTAHGGTNVVASFSWNGMALNPDNYLISKDVTGATKVKYYYAVNDGFPGDHYAVMISKTGTNAGDFTVVFEETPNGINKGGARFGLSTEANGAKPQSVWIERTVDLPAGTKYVAFRHYNCSDLNYILLDDIQFTMGGSPTPTDYTYTVYRDGTKIKEGLTETTFEEDGVATGNHEYCVEVKYTAGVSPKVCVNVTINPTQFNPVKNLKAQPDGGDVVLKWEAPSGKRGELLNEDFEGDAIPTGWTALDADGDGNNWDITLNEFTRGERHVLSPLRASNVAISYSSLLQGQEYLPLTPNNFLITPKVEGAKKITYKVGSPGLPQWSHDHYALCISKSGTAAADFEVIFEETMTYTQGGANLTREKDLPAGTKYVAFRHYNCTDVLGIMIDDVVITGEGEGPSYTYTVYRDGTKIQEGLTETTYRDAGMSAQSHEYCVEVKYAAGVSPKVCVDYIPDGVADVTAQKPYTLTVVGKTITVTCQGEAMIYDMNGRRLAAGRNTVVYTAQGGYYAVMVVVDGKSYVEKLAIK.

The signal sequence occupies residues methionine 1 to isoleucine 24. The propeptide occupies lysine 25–arginine 228. 5 residues coordinate Ca(2+): aspartate 313, aspartate 337, aspartate 339, phenylalanine 341, and glutamate 343. Residue histidine 444 is the Proton donor of the active site. Catalysis depends on cysteine 477, which acts as the Nucleophile. Residues phenylalanine 482 and glutamate 491 each coordinate Ca(2+). Residues tryptophan 964–serine 985 form a disordered region. Serine 987, glutamate 989, aspartate 1000, aspartate 1002, aspartate 1004, histidine 1006, serine 1021, glycine 1023, asparagine 1042, aspartate 1145, glutamate 1146, aspartate 1430, glutamate 1432, aspartate 1444, aspartate 1446, aspartate 1448, asparagine 1450, serine 1480, asparagine 1495, and aspartate 1585 together coordinate Ca(2+).

Belongs to the peptidase C25 family. Post-translationally, proteolytically cleaved into a catalytic subunit and three adhesins. Arg-gingipain is involved in this post-translational processing.

It localises to the secreted. It catalyses the reaction Endopeptidase with strict specificity for lysyl bonds.. Activated by the thiol-reducing agents cysteine, 2-mercaptoethanol and dithiothreitol. Inhibited by iodacetamide, iodoacetic acid, leupeptin, tosyl-L-lysine and tosyl-L-phenylalanine. Not inhibited by elastatinal, chymostatin, cystatins, alpha1-antichymotrypsin or the serine protease inhibitors phenylmethylsulfonyl fluoride and diisopropylfluorophosphate. Not inhibited by metal ion chelators. Inhibited by the heavy metal ions Fe(3+), Zn(2+), Cu(2+) and Mn(2+). Its function is as follows. Cysteine proteinase with a strong preference for substrates with Lys in the P1 position. Hydrolyzes bovine hemoglobin, bovine serum albumin, casein, human placental type I collagen and human IgA and IgG. Disrupts the functions of polymorphonuclear leukocytes. May act as a virulence factor in the development of peridontal disease. Involved in the coaggregation of P.gingivalis with other oral bacteria. The sequence is that of Lys-gingipain from Porphyromonas gingivalis (strain ATCC 33277 / DSM 20709 / CIP 103683 / JCM 12257 / NCTC 11834 / 2561).